The chain runs to 215 residues: Adenylate kinase (215 aa).

10–15 (GAGKGT) contributes to the ATP binding site. The tract at residues 30–59 (STGDLLRAAVAAGTPLGKEAKAYMDRGELV) is NMP. Residues Thr-31, Arg-36, 57–59 (ELV), 85–88 (GFPR), and Gln-92 each bind AMP. An LID region spans residues 126–163 (GRRTCKSCGQMYNVYYSPSKVEGKCDKCGGELFQRDDD). Arg-127 is an ATP binding site. Cys-130, Cys-133, Cys-150, and Cys-153 together coordinate Zn(2+). AMP is bound by residues Arg-160 and Arg-171. Residue Gly-199 coordinates ATP.

Belongs to the adenylate kinase family. Monomer.

Its subcellular location is the cytoplasm. The enzyme catalyses AMP + ATP = 2 ADP. The protein operates within purine metabolism; AMP biosynthesis via salvage pathway; AMP from ADP: step 1/1. In terms of biological role, catalyzes the reversible transfer of the terminal phosphate group between ATP and AMP. Plays an important role in cellular energy homeostasis and in adenine nucleotide metabolism. This Thermodesulfovibrio yellowstonii (strain ATCC 51303 / DSM 11347 / YP87) protein is Adenylate kinase.